An 822-amino-acid polypeptide reads, in one-letter code: Valine--tRNA ligase (822 aa).

A 'HIGH' region motif is present at residues 41 to 51; the sequence is PNVTGQLHLGH. The 'KMSKS' region signature appears at 511-515; that stretch reads KMSKS. Lys-514 provides a ligand contact to ATP. Residues 765–822 are a coiled coil; the sequence is EQKGRELKEIQFLKSEILRAEKILTNKGFLEKAPREKIDLERTKLEKLKEKLAFYEKK.

This sequence belongs to the class-I aminoacyl-tRNA synthetase family. ValS type 1 subfamily. Monomer.

It is found in the cytoplasm. It carries out the reaction tRNA(Val) + L-valine + ATP = L-valyl-tRNA(Val) + AMP + diphosphate. Its function is as follows. Catalyzes the attachment of valine to tRNA(Val). As ValRS can inadvertently accommodate and process structurally similar amino acids such as threonine, to avoid such errors, it has a 'posttransfer' editing activity that hydrolyzes mischarged Thr-tRNA(Val) in a tRNA-dependent manner. This Mesomycoplasma hyopneumoniae (strain 7448) (Mycoplasma hyopneumoniae) protein is Valine--tRNA ligase.